A 388-amino-acid chain; its full sequence is 1-deoxy-D-xylulose 5-phosphate reductoisomerase (388 aa).

Threonine 15, glycine 16, serine 17, isoleucine 18, and asparagine 127 together coordinate NADPH. Lysine 128 is a binding site for 1-deoxy-D-xylulose 5-phosphate. Residue glutamate 129 participates in NADPH binding. Aspartate 153 is a Mn(2+) binding site. Residues serine 154, glutamate 155, serine 179, and histidine 202 each coordinate 1-deoxy-D-xylulose 5-phosphate. Residue glutamate 155 participates in Mn(2+) binding. Glycine 208 contributes to the NADPH binding site. 1-deoxy-D-xylulose 5-phosphate-binding residues include serine 215, asparagine 220, lysine 221, and glutamate 224. Glutamate 224 is a Mn(2+) binding site.

This sequence belongs to the DXR family. Mg(2+) is required as a cofactor. Requires Mn(2+) as cofactor.

The enzyme catalyses 2-C-methyl-D-erythritol 4-phosphate + NADP(+) = 1-deoxy-D-xylulose 5-phosphate + NADPH + H(+). Its pathway is isoprenoid biosynthesis; isopentenyl diphosphate biosynthesis via DXP pathway; isopentenyl diphosphate from 1-deoxy-D-xylulose 5-phosphate: step 1/6. Functionally, catalyzes the NADPH-dependent rearrangement and reduction of 1-deoxy-D-xylulose-5-phosphate (DXP) to 2-C-methyl-D-erythritol 4-phosphate (MEP). This is 1-deoxy-D-xylulose 5-phosphate reductoisomerase from Bacteroides fragilis (strain YCH46).